The following is a 501-amino-acid chain: Protein translocase subunit SecD (501 aa).

A run of 6 helical transmembrane segments spans residues 9-29 (NLWL…YAVV), 339-359 (AIEQ…VVLI), 371-391 (ISIF…GATL), 394-414 (PGIA…VLIF), 447-467 (VTLL…VKGF), and 470-490 (TLAL…KVFL).

The protein belongs to the SecD/SecF family. SecD subfamily. Forms a complex with SecF. Part of the essential Sec protein translocation apparatus which comprises SecA, SecYEG and auxiliary proteins SecDF. Other proteins may also be involved.

It localises to the cell inner membrane. Functionally, part of the Sec protein translocase complex. Interacts with the SecYEG preprotein conducting channel. SecDF uses the proton motive force (PMF) to complete protein translocation after the ATP-dependent function of SecA. This is Protein translocase subunit SecD from Aquifex aeolicus (strain VF5).